Reading from the N-terminus, the 668-residue chain is Kinesin-like protein KIF2B (668 aa).

T125 carries the phosphothreonine; by PLK1 modification. Residues 149–177 are a coiled coil; that stretch reads CLREIEKLQKQREKRRRLQLEIRARRALD. Position 204 is a phosphoserine; by PLK1 (S204). The 331-residue stretch at 213–543 folds into the Kinesin motor domain; the sequence is RICVCVRKRP…LRYANRVKEL (331 aa). ATP is bound at residue 303-310; it reads GQTGSGKT. Basic and acidic residues predominate over residues 585-604; the sequence is PTVEKEEEKESDELTSKKEP. The segment at 585–605 is disordered; that stretch reads PTVEKEEEKESDELTSKKEPA. A coiled-coil region spans residues 646 to 667; that stretch reads VLTDIQKKLQSLREDLQKKSQV.

This sequence belongs to the TRAFAC class myosin-kinesin ATPase superfamily. Kinesin family. MCAK/KIF2 subfamily. Post-translationally, phosphorylation at Thr-125 by PLK1 is required for activity in the correction of kinetochore-microtubules attachment errors, while phosphorylation at Ser-204 also by PLK1 is required for the kinetochore localization and activity in prometaphase.

Its subcellular location is the cytoplasm. It is found in the cytoskeleton. The protein localises to the microtubule organizing center. It localises to the centrosome. The protein resides in the spindle. Its subcellular location is the chromosome. It is found in the centromere. The protein localises to the kinetochore. Functionally, plus end-directed microtubule-dependent motor required for spindle assembly and chromosome movement during mitosis. Has microtubule depolymerization activity. Plays a role in chromosome congression. This Mus musculus (Mouse) protein is Kinesin-like protein KIF2B (Kif2b).